Here is a 62-residue protein sequence, read N- to C-terminus: Conotoxin Im11.9 (62 aa).

The signal sequence occupies residues 1-22 (MFRVTSVLLVIVLLNLVVLTNA). 4 disulfide bridges follow: Cys23-Cys33, Cys27-Cys38, Cys32-Cys41, and Cys37-Cys46. Positions 23-49 (CHMDCSKMTCCSGICCFYCGRPMCPGT) are excised as a propeptide.

Belongs to the conotoxin I2 superfamily. As to expression, expressed by the venom duct.

The protein localises to the secreted. Probable neurotoxin. In Conus imperialis (Imperial cone), this protein is Conotoxin Im11.9.